Reading from the N-terminus, the 670-residue chain is Proline-rich receptor-like protein kinase PERK5 (670 aa).

A disordered region spans residues M1–N181. Residues M1 to N186 are Extracellular-facing. Low complexity predominate over residues T14–S31. N22 and N28 each carry an N-linked (GlcNAc...) asparagine glycan. Pro residues-rich tracts occupy residues P32–P62 and P84–T109. A glycan (N-linked (GlcNAc...) asparagine) is linked at N130. Positions T132–G141 are enriched in low complexity. N-linked (GlcNAc...) asparagine glycosylation is present at N151. Low complexity predominate over residues S167–N181. The helical transmembrane segment at I187–I207 threads the bilayer. Topologically, residues C208 to L670 are cytoplasmic. At T301 the chain carries Phosphothreonine. The region spanning F312–M590 is the Protein kinase domain. ATP is bound by residues L318–V326 and K340. Position 385 is a phosphotyrosine (Y385). D436 serves as the catalytic Proton acceptor. Residue S469 is modified to Phosphoserine. 2 positions are modified to phosphothreonine: T470 and T475. At Y483 the chain carries Phosphotyrosine. Disordered stretches follow at residues S589 to E613 and E635 to L670. A compositionally biased stretch (polar residues) spans P599–E613.

The protein belongs to the protein kinase superfamily. Ser/Thr protein kinase family. In terms of tissue distribution, mostly expressed in flower buds.

It is found in the cell membrane. The catalysed reaction is L-seryl-[protein] + ATP = O-phospho-L-seryl-[protein] + ADP + H(+). The enzyme catalyses L-threonyl-[protein] + ATP = O-phospho-L-threonyl-[protein] + ADP + H(+). This Arabidopsis thaliana (Mouse-ear cress) protein is Proline-rich receptor-like protein kinase PERK5 (PERK5).